Consider the following 399-residue polypeptide: S-adenosylmethionine synthase (399 aa).

His-17 contacts ATP. Asp-19 serves as a coordination point for Mg(2+). Glu-52 contacts K(+). L-methionine contacts are provided by Glu-65 and Gln-109. The interval 109-119 (QSADIAQGVDA) is flexible loop. ATP-binding positions include 177-179 (DSK), 243-244 (KF), Asp-252, 258-259 (RK), Ala-275, and Lys-279. Asp-252 provides a ligand contact to L-methionine. Lys-283 lines the L-methionine pocket.

This sequence belongs to the AdoMet synthase family. Homotetramer; dimer of dimers. Mg(2+) serves as cofactor. The cofactor is K(+).

It localises to the cytoplasm. It carries out the reaction L-methionine + ATP + H2O = S-adenosyl-L-methionine + phosphate + diphosphate. It participates in amino-acid biosynthesis; S-adenosyl-L-methionine biosynthesis; S-adenosyl-L-methionine from L-methionine: step 1/1. Its function is as follows. Catalyzes the formation of S-adenosylmethionine (AdoMet) from methionine and ATP. The overall synthetic reaction is composed of two sequential steps, AdoMet formation and the subsequent tripolyphosphate hydrolysis which occurs prior to release of AdoMet from the enzyme. The chain is S-adenosylmethionine synthase from Bradyrhizobium sp. (strain BTAi1 / ATCC BAA-1182).